A 313-amino-acid chain; its full sequence is tRNA dimethylallyltransferase (313 aa).

Residue 11–18 (GPTACGKT) coordinates ATP. Substrate is bound at residue 13 to 18 (TACGKT). Interaction with substrate tRNA regions lie at residues 36 to 39 (DSAL), 160 to 164 (QRIER), and 243 to 248 (RCVGYR).

The protein belongs to the IPP transferase family. In terms of assembly, monomer. Mg(2+) is required as a cofactor.

The catalysed reaction is adenosine(37) in tRNA + dimethylallyl diphosphate = N(6)-dimethylallyladenosine(37) in tRNA + diphosphate. Functionally, catalyzes the transfer of a dimethylallyl group onto the adenine at position 37 in tRNAs that read codons beginning with uridine, leading to the formation of N6-(dimethylallyl)adenosine (i(6)A). The protein is tRNA dimethylallyltransferase of Neisseria meningitidis serogroup C (strain 053442).